A 368-amino-acid polypeptide reads, in one-letter code: Peptide chain release factor 2 (368 aa).

Residue Gln250 is modified to N5-methylglutamine.

This sequence belongs to the prokaryotic/mitochondrial release factor family. Post-translationally, methylated by PrmC. Methylation increases the termination efficiency of RF2.

The protein resides in the cytoplasm. Functionally, peptide chain release factor 2 directs the termination of translation in response to the peptide chain termination codons UGA and UAA. The sequence is that of Peptide chain release factor 2 from Rickettsia bellii (strain RML369-C).